The sequence spans 208 residues: Ribosomal RNA large subunit methyltransferase E (208 aa).

S-adenosyl-L-methionine contacts are provided by Gly61, Trp63, Asp81, Asp97, and Asp122. Lys162 serves as the catalytic Proton acceptor.

The protein belongs to the class I-like SAM-binding methyltransferase superfamily. RNA methyltransferase RlmE family.

It is found in the cytoplasm. It carries out the reaction uridine(2552) in 23S rRNA + S-adenosyl-L-methionine = 2'-O-methyluridine(2552) in 23S rRNA + S-adenosyl-L-homocysteine + H(+). Specifically methylates the uridine in position 2552 of 23S rRNA at the 2'-O position of the ribose in the fully assembled 50S ribosomal subunit. The protein is Ribosomal RNA large subunit methyltransferase E of Pseudomonas entomophila (strain L48).